Here is a 565-residue protein sequence, read N- to C-terminus: DNA ligase B (565 aa).

Lys-130 acts as the N6-AMP-lysine intermediate in catalysis.

It belongs to the NAD-dependent DNA ligase family. LigB subfamily.

It catalyses the reaction NAD(+) + (deoxyribonucleotide)n-3'-hydroxyl + 5'-phospho-(deoxyribonucleotide)m = (deoxyribonucleotide)n+m + AMP + beta-nicotinamide D-nucleotide.. In terms of biological role, catalyzes the formation of phosphodiester linkages between 5'-phosphoryl and 3'-hydroxyl groups in double-stranded DNA using NAD as a coenzyme and as the energy source for the reaction. The sequence is that of DNA ligase B from Yersinia enterocolitica serotype O:8 / biotype 1B (strain NCTC 13174 / 8081).